The primary structure comprises 430 residues: Small ribosomal subunit protein uS5m (430 aa).

The region spanning 218–282 is the S5 DRBM domain; it reads FDTRILEVRN…NRAVHHLHYI (65 aa).

Belongs to the universal ribosomal protein uS5 family. Component of the mitochondrial small ribosomal subunit (mt-SSU). Mature mammalian 55S mitochondrial ribosomes consist of a small (28S) and a large (39S) subunit. The 28S small subunit contains a 12S ribosomal RNA (12S mt-rRNA) and 30 different proteins. The 39S large subunit contains a 16S rRNA (16S mt-rRNA), a copy of mitochondrial valine transfer RNA (mt-tRNA(Val)), which plays an integral structural role, and 52 different proteins.

It localises to the mitochondrion. The polypeptide is Small ribosomal subunit protein uS5m (MRPS5) (Homo sapiens (Human)).